The following is a 382-amino-acid chain: D-galactonate dehydratase (382 aa).

Aspartate 183 provides a ligand contact to Mg(2+). Histidine 185 (proton donor) is an active-site residue. Residues glutamate 209 and glutamate 235 each contribute to the Mg(2+) site. Histidine 285 (proton acceptor) is an active-site residue.

It belongs to the mandelate racemase/muconate lactonizing enzyme family. GalD subfamily. It depends on Mg(2+) as a cofactor.

It carries out the reaction D-galactonate = 2-dehydro-3-deoxy-D-galactonate + H2O. It participates in carbohydrate acid metabolism; D-galactonate degradation; D-glyceraldehyde 3-phosphate and pyruvate from D-galactonate: step 1/3. In terms of biological role, catalyzes the dehydration of D-galactonate to 2-keto-3-deoxy-D-galactonate. This Ralstonia nicotianae (strain ATCC BAA-1114 / GMI1000) (Ralstonia solanacearum) protein is D-galactonate dehydratase.